The primary structure comprises 380 residues: GATOR1 complex protein NPRL2 (380 aa).

The tract at residues methionine 1–threonine 133 is interaction with PDPK1. Arginine 78 is a GDP binding site. Position 78 is an asymmetric dimethylarginine (arginine 78). Residues lysine 158 and lysine 357 each participate in a glycyl lysine isopeptide (Lys-Gly) (interchain with G-Cter in ubiquitin) cross-link.

The protein belongs to the NPR2 family. Within the GATOR complex, component of the GATOR1 subcomplex, made of DEPDC5, NPRL2 and NPRL3. GATOR1 mediates the strong interaction of the GATOR complex with small GTPases Rag (RagA/RRAGA, RagB/RRAGB, RagC/RRAGC and/or RagD/RRAGD) heterodimers. GATOR1 interacts with GPR155/LYCHOS; interaction takes place in presence of cholesterol and prevents interaction between GATOR1 and KICSTOR. Interacts with PDPK1. In terms of processing, in the presence of abundant amino acids, ubiquitinated at Lys-158 and Lys-357 via 'Lys-6'-linked ubiquitination by the WDR24 component of the GATOR2 complex, thereby inhibiting the GATOR1 complex and promoting mTORC1 activation. Post-translationally, asymmetric dimethylation at Arg-78 by PRMT1 inhibits the GTPase activator activity of the GATOR1 complex and consequently inducing timely mTORC1 activation under methionine-sufficient conditions.

It is found in the lysosome membrane. Its function is as follows. Catalytic component of the GATOR1 complex, a multiprotein complex that functions as an inhibitor of the amino acid-sensing branch of the mTORC1 pathway. In response to amino acid depletion, the GATOR1 complex has GTPase activating protein (GAP) activity and strongly increases GTP hydrolysis by RagA/RRAGA (or RagB/RRAGB) within heterodimeric Rag complexes, thereby turning them into their inactive GDP-bound form, releasing mTORC1 from lysosomal surface and inhibiting mTORC1 signaling. In the presence of abundant amino acids, the GATOR1 complex is ubiquitinated and inhibited by GATOR2. Within the GATOR1 complex, NPRL2 constitutes the catalytic subunit that mediates the GTPase activator activity and under methionine-sufficient conditions, the GTPase activator activity is inhibited by PRMT1 through methylation and consequently inducing timely mTORC1 activation. In terms of biological role, suppresses Src-dependent tyrosine phosphorylation and activation of PDPK1 and its downstream signaling. Down-regulates PDPK1 kinase activity by interfering with tyrosine phosphorylation at 'Tyr-9', 'Tyr-373' and 'Tyr-376' residues. May act as a tumor suppressor. Suppresses cell growth and enhances sensitivity to various anticancer drugs. The chain is GATOR1 complex protein NPRL2 from Mus musculus (Mouse).